The following is a 1139-amino-acid chain: Integrin alpha ina-1 (1139 aa).

A signal peptide spans 1–19 (MRECIISWTLLLCLSCVKS). At 20 to 1084 (FNLDVNAPIY…PTIGDSRPIP (1065 aa)) the chain is on the extracellular side. One copy of the FG-GAP 1 repeat lies at 21-85 (NLDVNAPIYR…CDINTFYNGG (65 aa)). N-linked (GlcNAc...) asparagine glycans are attached at residues N108 and N136. FG-GAP repeat units lie at residues 111-171 (RGRT…LQST), 180-231 (LPTT…IFDS), 242-302 (NGDM…SSSK), 307-370 (EDKF…QRKQ), 378-438 (HPPK…IEKF), and 448-510 (GNDL…MEKR). N313 is a glycosylation site (N-linked (GlcNAc...) asparagine). N580, N788, N851, and N1026 each carry an N-linked (GlcNAc...) asparagine glycan. Residues 1085–1106 (WWIYVIAAVIGVLILSLIIICL) traverse the membrane as a helical segment. The Cytoplasmic segment spans residues 1107–1139 (SKCGFFKRNRLDQPSLYTAQLKHEREEWADTGL).

Belongs to the integrin alpha chain family. As to quaternary structure, heterodimer of an alpha and a beta subunit. Alpha ina-1 associates with beta pat-3. Interacts (via cytoplasmic domain) with src-1 (when phosphorylated at 'Tyr-416').

The protein resides in the membrane. It localises to the cell projection. It is found in the phagocytic cup. The protein localises to the cytoplasmic vesicle. Its subcellular location is the phagosome membrane. Plays a role in cell migration, axon fasciculation, and morphogenesis. During gonad morphogenesis, involved in distal tip cell (DTC)-mediated guidance of gonad elongation, in maintaining their sharp tapering morphology and in their migration. Involved in the anterior-posterior positioning of QR neuroblast descendants by regulating the migratory speed of QR.p. Probably by acting as a receptor for apoptotic cells, plays a role in the clearance of apoptotic cells during mid-embryogenesis. The sequence is that of Integrin alpha ina-1 (ina-1) from Caenorhabditis elegans.